A 78-amino-acid polypeptide reads, in one-letter code: Small ribosomal subunit protein bS18 (78 aa).

This sequence belongs to the bacterial ribosomal protein bS18 family. Part of the 30S ribosomal subunit. Forms a tight heterodimer with protein bS6.

Functionally, binds as a heterodimer with protein bS6 to the central domain of the 16S rRNA, where it helps stabilize the platform of the 30S subunit. The sequence is that of Small ribosomal subunit protein bS18 from Geobacillus sp. (strain WCH70).